We begin with the raw amino-acid sequence, 122 residues long: Putative syntaxin 6 (122 aa).

At 1–100 the chain is on the cytoplasmic side; it reads MSNYRYSKLN…AKLTHLEDES (100 aa). The t-SNARE coiled-coil homology domain maps to 31-93; it reads EQIIQEQDDE…DTAMKKMAKL (63 aa). The chain crosses the membrane as a helical; Anchor for type IV membrane protein span at residues 101–121; the sequence is SQCKMIMVLSALLFFLVFVLL. A topological domain (extracellular) is located at residue valine 122.

This sequence belongs to the syntaxin family.

The protein resides in the membrane. Functionally, SNARE promoting movement of transport vesicles to target membranes. Potentially functions in retrograde trafficking and in the endocytic recycling pathway. This chain is Putative syntaxin 6 (syx-6), found in Caenorhabditis elegans.